A 523-amino-acid polypeptide reads, in one-letter code: MAAALQVLPRLARAPLHPLLWRGSVARLASSMALAEQARQLFESAVGAVLPGPMLHRALSLDPGGRQLKVRDRNFQLRQNLYLVGFGKAVLGMAAAAEELLGQHLVQGVISVPKGIRAAMERAGKQEMLLKPHSRVQVFEGAEDNLPDRDALRAALAIQQLAEGLTADDLLLVLISGGGSALLPAPIPPVTLEEKQTLTRLLAARGATIQELNTIRKALSQLKGGGLAQAAYPAQVVSLILSDVVGDPVEVIASGPTVASSHNVQDCLHILNRYGLRAALPRSVKTVLSRADSDPHGPHTCGHVLNVIIGSNVLALAEAQRQAEALGYQAVVLSAAMQGDVKSMAQFYGLLAHVARTRLTPSMAGASVEEDAQLHELAAELQIPDLQLEEALETMAWGRGPVCLLAGGEPTVQLQGSGRGGRNQELALRVGAELRRWPLGPIDVLFLSGGTDGQDGPTEAAGAWVTPELASQAAAEGLDIATFLAHNDSHTFFCCLQGGAHLLHTGMTGTNVMDTHLLFLRPR.

Ser60 is subject to Phosphoserine.

This sequence belongs to the glycerate kinase type-2 family. Widely expressed.

Its subcellular location is the cytoplasm. It localises to the mitochondrion. The catalysed reaction is (R)-glycerate + ATP = (2R)-3-phosphoglycerate + ADP + H(+). The chain is Glycerate kinase (GLYCTK) from Homo sapiens (Human).